Reading from the N-terminus, the 438-residue chain is Protein maelstrom 1 (438 aa).

Positions A2 to L69 form a DNA-binding region, HMG box. The interval K374–R438 is disordered. Residues L381 to S391 are compositionally biased toward polar residues.

Belongs to the maelstrom family.

It localises to the cytoplasm. The protein resides in the nucleus. Functionally, involved both in the piRNA and miRNA metabolic processes. As a component of the meiotic nuage, plays a central role during oogenesis by repressing transposable elements and preventing their mobilization, which is essential for the germline integrity. Repression of transposable elements is mediated via the piRNA metabolic process, which mediates the repression of transposable elements during meiosis by forming complexes composed of piRNAs and Piwi proteins and governs the repression of transposons. As a nuclear component, it is required for proper differentiation in the germline stem cell (GSC) lineage by repressing microRNA-7 (miR-7), thereby acting as an indirect regulator of bag-of-marbles (Bam). Acts by binding to the promoter of miR-7 gene and repressing its expression; miR-7 repression alleviates the Bam repression by miR-7, thereby allowing differentiation in the germline stem cell (GSC) lineage. This chain is Protein maelstrom 1 (mael1), found in Drosophila persimilis (Fruit fly).